The sequence spans 429 residues: Serine--tRNA ligase (429 aa).

235–237 (TAE) is an L-serine binding site. 266–268 (RSE) serves as a coordination point for ATP. An L-serine-binding site is contributed by glutamate 289. Residue 353 to 356 (EISS) participates in ATP binding. Serine 389 provides a ligand contact to L-serine.

Belongs to the class-II aminoacyl-tRNA synthetase family. Type-1 seryl-tRNA synthetase subfamily. Homodimer. The tRNA molecule binds across the dimer.

It localises to the cytoplasm. The enzyme catalyses tRNA(Ser) + L-serine + ATP = L-seryl-tRNA(Ser) + AMP + diphosphate + H(+). It carries out the reaction tRNA(Sec) + L-serine + ATP = L-seryl-tRNA(Sec) + AMP + diphosphate + H(+). It participates in aminoacyl-tRNA biosynthesis; selenocysteinyl-tRNA(Sec) biosynthesis; L-seryl-tRNA(Sec) from L-serine and tRNA(Sec): step 1/1. Functionally, catalyzes the attachment of serine to tRNA(Ser). Is also able to aminoacylate tRNA(Sec) with serine, to form the misacylated tRNA L-seryl-tRNA(Sec), which will be further converted into selenocysteinyl-tRNA(Sec). The polypeptide is Serine--tRNA ligase (Haemophilus influenzae (strain PittEE)).